A 609-amino-acid polypeptide reads, in one-letter code: UvrABC system protein C (609 aa).

A GIY-YIG domain is found at 16–94 (SSPGVYRMYD…IKQYMPKYNV (79 aa)). The 36-residue stretch at 203-238 (QQVMSVLVQKMEQASSDMRYEQAALYRDQITALRRV) folds into the UVR domain.

It belongs to the UvrC family. In terms of assembly, interacts with UvrB in an incision complex.

The protein localises to the cytoplasm. The UvrABC repair system catalyzes the recognition and processing of DNA lesions. UvrC both incises the 5' and 3' sides of the lesion. The N-terminal half is responsible for the 3' incision and the C-terminal half is responsible for the 5' incision. This Shewanella pealeana (strain ATCC 700345 / ANG-SQ1) protein is UvrABC system protein C.